Here is a 121-residue protein sequence, read N- to C-terminus: MTLRARGARLLGGLLFFTLLAAGAAPLSWDLPEPRSRAGKIRVHPRGNLWATGHFMGKKSLEPPNPSLLGTTHHISLRDQRLQLSHDLLRILLQKKALGLSLSGPASHTPYRRLLVQTLEK.

Positions 1–24 (MTLRARGARLLGGLLFFTLLAAGA) are cleaved as a signal peptide. Residue Met56 is modified to Methionine amide. The propeptide occupies 60–121 (SLEPPNPSLL…RRLLVQTLEK (62 aa)).

The protein belongs to the bombesin/neuromedin-B/ranatensin family. Higher expression in the central nervous system (CNS) than in peripheral tissues. Highest levels are found in the olfactory bulb. Relatively high levels in the CNS (including the cerebral cortex, cerebellum, spinal cord, medulla oblongata, midbrain, hypothalamus, hippocampus, and hypophysis) and in peripheral tissues such as the pancreas, adrenal gland, testis, ovary and cecum. Moderate levels are found in the rectum, heart and pons with low expression levels detected in the bone marrow and duodenum. Other tissues show no or low levels of expression.

The protein resides in the secreted. It is found in the cell projection. It localises to the neuron projection. Stimulates smooth muscle contraction. Induces sighing by acting directly on the pre-Botzinger complex, a cluster of several thousand neurons in the ventrolateral medulla responsible for inspiration during respiratory activity. Contributes to the induction of sneezing following exposure to chemical irritants or allergens which causes release of NMB by nasal sensory neurons and activation of NMBR-expressing neurons in the sneeze-evoking region of the brainstem. These in turn activate neurons of the caudal ventral respiratory group, giving rise to the sneezing response. Contributes to induction of acute itch, possibly through activation of the NMBR receptor on dorsal root ganglion neurons. Increases expression of NMBR and steroidogenic mediators STAR, CYP11A1 and HSD3B1 in Leydig cells, induces secretion of testosterone by Leydig cells and also promotes Leydig cell proliferation. Plays a role in the innate immune response to influenza A virus infection by enhancing interferon alpha expression and reducing expression of IL6. Plays a role in CSF1-induced proliferation of osteoclast precursors by contributing to positive regulation of the expression of the CSF1 receptor CSF1R. The polypeptide is Neuromedin-B (NMB) (Sus scrofa (Pig)).